The primary structure comprises 222 residues: 7-cyano-7-deazaguanine synthase (222 aa).

An ATP-binding site is contributed by 7–17 (LSGGMDSAVAT). Positions 188, 196, 199, and 202 each coordinate Zn(2+).

Belongs to the QueC family. Zn(2+) is required as a cofactor.

It carries out the reaction 7-carboxy-7-deazaguanine + NH4(+) + ATP = 7-cyano-7-deazaguanine + ADP + phosphate + H2O + H(+). The protein operates within purine metabolism; 7-cyano-7-deazaguanine biosynthesis. In terms of biological role, catalyzes the ATP-dependent conversion of 7-carboxy-7-deazaguanine (CDG) to 7-cyano-7-deazaguanine (preQ(0)). This Methanothermobacter thermautotrophicus (strain ATCC 29096 / DSM 1053 / JCM 10044 / NBRC 100330 / Delta H) (Methanobacterium thermoautotrophicum) protein is 7-cyano-7-deazaguanine synthase.